The sequence spans 1167 residues: Tight junction protein 2 (1167 aa).

Residues 10-97 enclose the PDZ 1 domain; it reads TVTLQKDSKR…IAAIVVKRPR (88 aa). Residues serine 107, serine 127, serine 130, serine 140, serine 145, serine 147, serine 173, serine 194, serine 205, and serine 239 each carry the phosphoserine modification. Residues 129–195 are disordered; the sequence is RSGYSERSRH…SRERSRGRSL (67 aa). Residues 225–286 form a disordered region; that stretch reads SYHEAYEPDY…KGQHDPDRPI (62 aa). The span at 242-262 shows a compositional bias: basic and acidic residues; it reads YDRRAHPETRYERSRSREHLR. The PDZ 2 domain maps to 287-365; sequence GVLLTKSKAN…KLQLVVLRDS (79 aa). Serine 305, serine 378, serine 380, serine 386, serine 395, serine 404, serine 410, and serine 411 each carry phosphoserine. Positions 381–485 are disordered; it reads EVEDISEIES…LRPSPEDEAI (105 aa). Residues 395–426 are compositionally biased toward basic and acidic residues; it reads SPEERRQQYSDQDYHSSTEKLKERPSSREETS. The residue at position 435 (threonine 435) is a Phosphothreonine. Residue serine 479 is modified to Phosphoserine. Positions 489–570 constitute a PDZ 3 domain; that stretch reads NTKMVRFKKG…GETVTILAQS (82 aa). Tyrosine 554 carries the phosphotyrosine modification. The SH3 domain occupies 584-649; sequence GDSFFIRSHF…PNKSRAEQMA (66 aa). Residues 660–858 form the Guanylate kinase-like domain; that stretch reads GDRADFWRMR…WFGSLKDSIQ (199 aa). Phosphoserine occurs at positions 684 and 884. Threonine 887 carries the post-translational modification Phosphothreonine. Serine 895 and serine 902 each carry phosphoserine. Disordered stretches follow at residues 904 to 1055 and 1095 to 1167; these read FEDT…PRSV and YAVP…DTEL. Residues threonine 907 and threonine 915 each carry the phosphothreonine modification. The segment covering 938–949 has biased composition (basic and acidic residues); the sequence is VQHEENIRKSSP. Serine 948, serine 960, serine 968, serine 988, and serine 1044 each carry phosphoserine. The span at 976–990 shows a compositional bias: basic and acidic residues; it reads EPPKARSQNREDSFD. Acidic residues predominate over residues 1037–1049; it reads ESEEVGESTEEQE. Tyrosine 1095 carries the post-translational modification Phosphotyrosine. Serine 1124 and serine 1136 each carry phosphoserine. The interaction with SCRIB stretch occupies residues 1165–1167; it reads TEL.

It belongs to the MAGUK family. In terms of assembly, homodimer. Interacts (via PDZ2 domain) with TJP1/ZO1 (via PDZ2 domain). Interacts with UBN1. Interacts with SCRIB. Interacts with OCLN. Interacts with SAFB in the nucleus. Interacts with USP53 (via the C-terminal region). Interacts with claudins, including CLDN1, CLDN2, CLDN3, CLDN5 and CLDN7. Interacts with CLDN18. Interacts (via N-terminus) with CTNNA1.

Its subcellular location is the cell junction. The protein localises to the adherens junction. It is found in the cell membrane. It localises to the nucleus. The protein resides in the tight junction. Plays a role in tight junctions and adherens junctions. Acts as a positive regulator of RANKL-induced osteoclast differentiation, potentially via mediating downstream transcriptional activity. In Mus musculus (Mouse), this protein is Tight junction protein 2.